The sequence spans 214 residues: Uridine kinase (214 aa).

15–22 (GASASGKS) lines the ATP pocket.

This sequence belongs to the uridine kinase family.

Its subcellular location is the cytoplasm. It carries out the reaction uridine + ATP = UMP + ADP + H(+). The enzyme catalyses cytidine + ATP = CMP + ADP + H(+). It participates in pyrimidine metabolism; CTP biosynthesis via salvage pathway; CTP from cytidine: step 1/3. The protein operates within pyrimidine metabolism; UMP biosynthesis via salvage pathway; UMP from uridine: step 1/1. The chain is Uridine kinase from Aeromonas hydrophila subsp. hydrophila (strain ATCC 7966 / DSM 30187 / BCRC 13018 / CCUG 14551 / JCM 1027 / KCTC 2358 / NCIMB 9240 / NCTC 8049).